The primary structure comprises 430 residues: Enolase (430 aa).

Residue Q167 coordinates (2R)-2-phosphoglycerate. The active-site Proton donor is E209. D245, E286, and D313 together coordinate Mg(2+). Residues K338, R367, S368, and K389 each contribute to the (2R)-2-phosphoglycerate site. The Proton acceptor role is filled by K338.

Belongs to the enolase family. Mg(2+) serves as cofactor.

It is found in the cytoplasm. Its subcellular location is the secreted. The protein resides in the cell surface. It carries out the reaction (2R)-2-phosphoglycerate = phosphoenolpyruvate + H2O. The protein operates within carbohydrate degradation; glycolysis; pyruvate from D-glyceraldehyde 3-phosphate: step 4/5. In terms of biological role, catalyzes the reversible conversion of 2-phosphoglycerate (2-PG) into phosphoenolpyruvate (PEP). It is essential for the degradation of carbohydrates via glycolysis. This chain is Enolase, found in Synechococcus sp. (strain CC9605).